We begin with the raw amino-acid sequence, 322 residues long: tRNA-dihydrouridine synthase B (322 aa).

FMN is bound by residues 16-18 (PMA) and Q70. Catalysis depends on C100, which acts as the Proton donor. FMN is bound by residues K139, 200–202 (NGD), and 224–225 (GR).

It belongs to the Dus family. DusB subfamily. FMN serves as cofactor.

It catalyses the reaction a 5,6-dihydrouridine in tRNA + NAD(+) = a uridine in tRNA + NADH + H(+). The enzyme catalyses a 5,6-dihydrouridine in tRNA + NADP(+) = a uridine in tRNA + NADPH + H(+). Functionally, catalyzes the synthesis of 5,6-dihydrouridine (D), a modified base found in the D-loop of most tRNAs, via the reduction of the C5-C6 double bond in target uridines. The sequence is that of tRNA-dihydrouridine synthase B from Vibrio parahaemolyticus serotype O3:K6 (strain RIMD 2210633).